The primary structure comprises 353 residues: MAMTLLEDWCRGMDVNSQRALLVWGIPVNCDEAEIEETLQAAMPQVSYRMLGRMFWREENAKAALLELTGAVDYAAIPREMPGKGGVWKVLFKPPTSDAEFLERLHLFLAREGWTVQDVARVLGFQNPTPTPGPEMPAEMLNYILDNVIQPLVESIWYKRLTLFSGRDIPGPGEETFDPWLEHTNEVLEEWQVSDVEKRRRLMESLRGPAADVIRILKSNNPAITTAECLKALEQVFGSVESSRDAQIKFLNTYQNPGEKLSAYVIRLEPLLQKVVEKGAIDKDNVNQARLEQVIAGANHSGAIRRQLWLTGAGEGPAPNLFQLLVQIREEEAKEEEEEAEATLLQLGLEGHF.

The protein belongs to the PNMA family. As to expression, testis- and brain-specific. In some cancer patients, specifically expressed by paraneoplastic tumor cells.

The protein resides in the nucleus. It localises to the nucleolus. The polypeptide is Paraneoplastic antigen Ma1 (PNMA1) (Homo sapiens (Human)).